Reading from the N-terminus, the 276-residue chain is Rhomboid protease GlpG (276 aa).

6 helical membrane passes run 94-114, 142-162, 169-189, 192-212, 229-249, and 250-270; these read GPFT…MNVV, ALMH…WYLG, LGSG…GYVQ, FSGP…GYAW, LITF…GMSI, and ANGA…ADTL. Ser-201 (nucleophile) is an active-site residue. His-254 is a catalytic residue.

This sequence belongs to the peptidase S54 family.

It localises to the cell inner membrane. It carries out the reaction Cleaves type-1 transmembrane domains using a catalytic dyad composed of serine and histidine that are contributed by different transmembrane domains.. Functionally, rhomboid-type serine protease that catalyzes intramembrane proteolysis. This Enterobacter sp. (strain 638) protein is Rhomboid protease GlpG.